We begin with the raw amino-acid sequence, 162 residues long: Protein NrdI (162 aa).

Belongs to the NrdI family.

In terms of biological role, probably involved in ribonucleotide reductase function. The sequence is that of Protein NrdI from Streptococcus pyogenes serotype M3 (strain ATCC BAA-595 / MGAS315).